The following is a 242-amino-acid chain: uncharacterized protein (242 aa).

Residue 8-15 (TGASGGIG) participates in NADP(+) binding. Serine 137 contributes to the substrate binding site. Tyrosine 150 serves as the catalytic Proton acceptor.

Belongs to the short-chain dehydrogenases/reductases (SDR) family.

This is an uncharacterized protein from Bacillus subtilis (strain 168).